The sequence spans 281 residues: 2-dehydro-3-deoxyphosphooctonate aldolase (281 aa).

Belongs to the KdsA family.

The protein resides in the cytoplasm. The enzyme catalyses D-arabinose 5-phosphate + phosphoenolpyruvate + H2O = 3-deoxy-alpha-D-manno-2-octulosonate-8-phosphate + phosphate. The protein operates within carbohydrate biosynthesis; 3-deoxy-D-manno-octulosonate biosynthesis; 3-deoxy-D-manno-octulosonate from D-ribulose 5-phosphate: step 2/3. It functions in the pathway bacterial outer membrane biogenesis; lipopolysaccharide biosynthesis. In Pseudomonas savastanoi pv. phaseolicola (strain 1448A / Race 6) (Pseudomonas syringae pv. phaseolicola (strain 1448A / Race 6)), this protein is 2-dehydro-3-deoxyphosphooctonate aldolase.